Consider the following 248-residue polypeptide: Putative insertion sequence ATP-binding protein y4uH (248 aa).

106–113 is an ATP binding site; the sequence is GPTGIGKS.

It belongs to the IS21/IS1162 putative ATP-binding protein family.

This is Putative insertion sequence ATP-binding protein y4uH from Sinorhizobium fredii (strain NBRC 101917 / NGR234).